Reading from the N-terminus, the 540-residue chain is Probable ATP-dependent RNA helicase DDX28 (540 aa).

The Mitochondrial targeting signal motif lies at 3–18 (LTRPVRLFSLVTRLLL). Positions 126–156 (GSFADLGLEPRVLHALQEAAPEVVQPTTVQS) match the Q motif motif. Residues 159 to 351 (IPSLLRGRHV…NKVASPDAVT (193 aa)) enclose the Helicase ATP-binding domain. 172 to 179 (AETGSGKT) contacts ATP. Residues 180–191 (LSYLLPLLQRLL) carry the Nuclear export signal motif. The short motif at 286 to 289 (DEAD) is the DEAD element. The Helicase C-terminal domain maps to 377–536 (KVAELVHILK…GLASSVKEPL (160 aa)). The short motif at 520–523 (RRRR) is the Nuclear localization signal element.

Belongs to the DEAD box helicase family. In terms of assembly, monomer. Found in a complex with GRSF1, DHX30, FASTKD2 and FASTKD5. Associates with the 16S mitochondrial rRNA (16S mt-rRNA) and with the mitochondrial ribosome large subunit (39S). Expressed in all tissues tested, including brain, placenta, lung, liver, skeletal muscle, kidney, pancreas, leukocytes, colon, small intestine, ovary and prostate.

It localises to the nucleus. Its subcellular location is the mitochondrion. It is found in the mitochondrion matrix. The protein resides in the mitochondrion nucleoid. It catalyses the reaction ATP + H2O = ADP + phosphate + H(+). Plays an essential role in facilitating the proper assembly of the mitochondrial large ribosomal subunit and its helicase activity is essential for this function. May be involved in RNA processing or transport. Has RNA and Mg(2+)-dependent ATPase activity. In Homo sapiens (Human), this protein is Probable ATP-dependent RNA helicase DDX28 (DDX28).